The sequence spans 275 residues: Tryptophan synthase alpha chain (275 aa).

Active-site proton acceptor residues include Glu51 and Asp62.

It belongs to the TrpA family. As to quaternary structure, tetramer of two alpha and two beta chains.

The catalysed reaction is (1S,2R)-1-C-(indol-3-yl)glycerol 3-phosphate + L-serine = D-glyceraldehyde 3-phosphate + L-tryptophan + H2O. Its pathway is amino-acid biosynthesis; L-tryptophan biosynthesis; L-tryptophan from chorismate: step 5/5. In terms of biological role, the alpha subunit is responsible for the aldol cleavage of indoleglycerol phosphate to indole and glyceraldehyde 3-phosphate. This chain is Tryptophan synthase alpha chain, found in Methanopyrus kandleri (strain AV19 / DSM 6324 / JCM 9639 / NBRC 100938).